The sequence spans 126 residues: 13 kDa ribonucleoprotein-associated protein (126 aa).

This sequence belongs to the eukaryotic ribosomal protein eL8 family. As to quaternary structure, component of the U3 snoRNP particle. Binds to the C'/D and B/C motifs in U3 snoRNA. Component of the 25S U4/U6.U5 tri-snRNP particle, a subcomplex of the spliceosome. Binds to the 5' stem-loop of U4 snRNA.

It localises to the nucleus. Its subcellular location is the nucleolus. Common component of the spliceosome and rRNA processing machinery. In association with the spliceosomal U4/U6.U5 tri-snRNP particle, required for splicing of pre-mRNA. In association with box C/D snoRNPs, required for processing of pre-ribosomal RNA (rRNA) and site-specific 2'-O-methylation of substrate RNAs. Essential for the accumulation and stability of U4 snRNA, U6 snRNA, and box C/D snoRNAs. This chain is 13 kDa ribonucleoprotein-associated protein (SNU13), found in Candida albicans (strain SC5314 / ATCC MYA-2876) (Yeast).